The sequence spans 230 residues: Phosducin-like protein 1 (230 aa).

Residue M1 is modified to N-acetylmethionine. The 151-residue stretch at 16 to 166 (AEKDKHTTVD…VVGYKNGLEK (151 aa)) folds into the Phosducin domain. The stretch at 25–79 (DSDDKSSGEENLDELLNELDRELDEDHEFLSAYRSERLQQISDHLKQVKKNVEDD) forms a coiled coil. The tract at residues 81-230 (YGRLQCIDNE…RSESDSDLDI (150 aa)) is thioredoxin fold.

The protein belongs to the phosducin family. As to quaternary structure, interacts with the G protein beta-gamma subunit complex (STE4-STE18 complex).

It is found in the cytoplasm. Its function is as follows. Not essential for growth. Inhibits early G-protein signaling events following pheromone stimulation. May help create heterodimerizable beta-tubulin by facilitating the efficient transfer of nascent beta-tubulin polypeptides to the folding apparatus. In Saccharomyces cerevisiae (strain ATCC 204508 / S288c) (Baker's yeast), this protein is Phosducin-like protein 1 (PLP1).